The chain runs to 259 residues: Ribose-5-phosphate isomerase (259 aa).

Belongs to the ribose 5-phosphate isomerase family.

Its subcellular location is the cytoplasm. The catalysed reaction is aldehydo-D-ribose 5-phosphate = D-ribulose 5-phosphate. Its pathway is carbohydrate degradation; pentose phosphate pathway; D-ribose 5-phosphate from D-ribulose 5-phosphate (non-oxidative stage): step 1/1. This Vanderwaltozyma polyspora (strain ATCC 22028 / DSM 70294 / BCRC 21397 / CBS 2163 / NBRC 10782 / NRRL Y-8283 / UCD 57-17) (Kluyveromyces polysporus) protein is Ribose-5-phosphate isomerase (RKI1).